A 355-amino-acid polypeptide reads, in one-letter code: Chemerin-like receptor 2 (355 aa).

Residues 1–41 are Extracellular-facing; the sequence is MEDLEETLFEEFENYSYALDYYSLESDLEEKVQLGVVHWVS. Asn-14 is a glycosylation site (N-linked (GlcNAc...) asparagine). The chain crosses the membrane as a helical span at residues 42–62; the sequence is LVLYCLSFVLGIPGNAIVIWF. Residues 63–73 lie on the Cytoplasmic side of the membrane; that stretch reads TGFKWKKTVST. A helical transmembrane segment spans residues 74–94; sequence LWFLNLAIADFIFLLFLPLYI. The Extracellular portion of the chain corresponds to 95–112; sequence SYVVMNFHWPFGIWLCKA. A disulfide bridge links Cys-110 with Cys-187. Residues 113–133 form a helical membrane-spanning segment; sequence NSFTAQLNMFASVFFLTVISL. Topologically, residues 134–154 are cytoplasmic; the sequence is DHYIHLIHPVLSHRHRTLKNS. The chain crosses the membrane as a helical span at residues 155 to 175; sequence LIVIIFIWLLASLIGGPALYF. Residues 176–210 are Extracellular-facing; sequence RDTVEFNNHTLCYNNFQKHDPDLTVIRHHVLTWVK. Residues 211-231 traverse the membrane as a helical segment; that stretch reads FIVGYLFPLLTMSICYLCLIF. The Cytoplasmic segment spans residues 232 to 247; the sequence is KVKKRSILISSRHFWT. The helical transmembrane segment at 248–268 threads the bilayer; that stretch reads ILAVVVAFVVCWTPYHLFSIW. At 269 to 286 the chain is on the extracellular side; sequence ELTIHHNSYSHHVMQAGI. The chain crosses the membrane as a helical span at residues 287–307; sequence PLSTGLAFLNSCLNPILYVLI. The Cytoplasmic portion of the chain corresponds to 308–355; it reads SKKFQARFRSSVAEILKYTLWEVSCSGTVSEQLRNSETKNLCLLETAQ.

The protein belongs to the chemokine-like receptor (CMKLR) family.

It is found in the cell membrane. Its function is as follows. Receptor for chemoattractant adipokine chemerin/RARRES2 suggesting a role for this receptor in the regulation of inflammation and energy homesotasis. Signals mainly via beta-arrestin pathway. Binding of RARRES2 activates weakly G proteins, calcium mobilization and MAPK1/MAPK3 (ERK1/2) phosphorylation too. Acts also as a receptor for TAFA1, mediates its effects on neuronal stem-cell proliferation and differentiation via the activation of ROCK/ERK and ROCK/STAT3 signaling pathway. This is Chemerin-like receptor 2 (CMKLR2) from Macaca mulatta (Rhesus macaque).